The sequence spans 545 residues: Resolvase homolog YokA (545 aa).

The region spanning 14 to 165 (NILGYLRRSR…GAKYTYAAQG (152 aa)) is the Resolvase/invertase-type recombinase catalytic domain. Residues 19–46 (LRRSRQDMEREKRTGEDTLTEQKELMNK) are a coiled coil. The active-site O-(5'-phospho-DNA)-serine intermediate is serine 22. A DNA-binding region (recombinase) is located at residues 173-303 (PYGYQLNKKT…VKIANKVPLL (131 aa)). The stretch at 402-475 (NMKTKKQMSE…QDTQSEIDSN (74 aa)) forms a coiled coil.

The protein in the N-terminal section; belongs to the site-specific recombinase resolvase family.

In Bacillus subtilis (strain 168), this protein is Resolvase homolog YokA (yokA).